The primary structure comprises 499 residues: Glutamyl-tRNA(Gln) amidotransferase subunit A (499 aa).

Catalysis depends on charge relay system residues lysine 79 and serine 159. The active-site Acyl-ester intermediate is the serine 183.

The protein belongs to the amidase family. GatA subfamily. Heterotrimer of A, B and C subunits.

The enzyme catalyses L-glutamyl-tRNA(Gln) + L-glutamine + ATP + H2O = L-glutaminyl-tRNA(Gln) + L-glutamate + ADP + phosphate + H(+). Its function is as follows. Allows the formation of correctly charged Gln-tRNA(Gln) through the transamidation of misacylated Glu-tRNA(Gln) in organisms which lack glutaminyl-tRNA synthetase. The reaction takes place in the presence of glutamine and ATP through an activated gamma-phospho-Glu-tRNA(Gln). This chain is Glutamyl-tRNA(Gln) amidotransferase subunit A, found in Granulibacter bethesdensis (strain ATCC BAA-1260 / CGDNIH1).